The following is an 88-amino-acid chain: U-scoloptoxin(12)-Sa1a (88 aa).

A signal peptide spans 1 to 20 (MKYMIITVVILFTCALKMFC).

It belongs to the scoloptoxin-12 family. Contains 3 disulfide bonds. In terms of tissue distribution, expressed by the venom gland.

The protein localises to the secreted. This is U-scoloptoxin(12)-Sa1a from Scolopendra alternans (Florida Keys giant centipede).